The sequence spans 706 residues: Methionine--tRNA ligase (706 aa).

The 'HIGH' region motif lies at 13-23; sequence PYANGSIHLGH. Zn(2+)-binding residues include Cys144, Cys147, Cys157, and Cys160. Positions 336–340 match the 'KMSKS' region motif; that stretch reads KMSKS. Residue Lys339 coordinates ATP. The disordered stretch occupies residues 570 to 593; that stretch reads QQTMNTETESHSPQRHGQAQQHPV. A tRNA-binding domain is found at 604-706; the sequence is DFVKIDLRIA…SGAQPGMRVK (103 aa).

It belongs to the class-I aminoacyl-tRNA synthetase family. MetG type 1 subfamily. As to quaternary structure, homodimer. It depends on Zn(2+) as a cofactor.

The protein resides in the cytoplasm. The catalysed reaction is tRNA(Met) + L-methionine + ATP = L-methionyl-tRNA(Met) + AMP + diphosphate. In terms of biological role, is required not only for elongation of protein synthesis but also for the initiation of all mRNA translation through initiator tRNA(fMet) aminoacylation. This chain is Methionine--tRNA ligase, found in Nitrosomonas europaea (strain ATCC 19718 / CIP 103999 / KCTC 2705 / NBRC 14298).